We begin with the raw amino-acid sequence, 104 residues long: MSTYAIIKTGGKQVKVEVGQAIYVEKIDAEAGAEITFNEVVLVGGDKTVVGTPVVEGATVVGTVEKQGKQKKVVTFKYKPKKGSHRKQGHRQPYTKVVINAIKA.

It belongs to the bacterial ribosomal protein bL21 family. In terms of assembly, part of the 50S ribosomal subunit. Contacts protein L20.

Functionally, this protein binds to 23S rRNA in the presence of protein L20. The chain is Large ribosomal subunit protein bL21 from Streptococcus equi subsp. equi (strain 4047).